The following is a 373-amino-acid chain: SUN domain-containing protein 5 (373 aa).

The Nuclear segment spans residues 1–103 (MPRTRNIGAL…LFCQKVMEKM (103 aa)). The chain crosses the membrane as a helical span at residues 104-120 (GLLVLCVFGFWMFSMHL). The Perinuclear space segment spans residues 121-373 (PSKVEVWQDD…PKDSHLEPLS (253 aa)). Residues 136-180 (LQSLRMYQEKVRHHTGEIQDLRGSMNQLIAKLQKMEAISDEQKMA) adopt a coiled-coil conformation. An SUN domain is found at 204–362 (ASIDFEHTSA…YRVRVHGSVT (159 aa)).

In terms of assembly, probable homotrimer. Interacts with DNAJB13. Highly glycosylated in the Golgi apparatus during spermiogenesis. As to expression, testis-specific, abundantly expressed in spermatocytes and round spermatids.

It localises to the nucleus inner membrane. It is found in the golgi apparatus. Plays an essential role in anchoring sperm head to the tail. Is responsible for the attachment of the coupling apparatus to the sperm nuclear envelope. The polypeptide is SUN domain-containing protein 5 (Sun5) (Mus musculus (Mouse)).